A 155-amino-acid chain; its full sequence is Aspartate carbamoyltransferase regulatory chain (155 aa).

4 residues coordinate Zn(2+): cysteine 113, cysteine 118, cysteine 139, and cysteine 142.

This sequence belongs to the PyrI family. Contains catalytic and regulatory chains. The cofactor is Zn(2+).

In terms of biological role, involved in allosteric regulation of aspartate carbamoyltransferase. The protein is Aspartate carbamoyltransferase regulatory chain of Methanoculleus marisnigri (strain ATCC 35101 / DSM 1498 / JR1).